A 272-amino-acid chain; its full sequence is Probable ribonuclease HI_0526 (272 aa).

Positions 1 to 23 are cleaved as a signal peptide; the sequence is MKKLTSILSLIVLVILAIWQYFT. Residues H148, E195, and H199 contribute to the active site.

This sequence belongs to the RNase T2 family.

This chain is Probable ribonuclease HI_0526, found in Haemophilus influenzae (strain ATCC 51907 / DSM 11121 / KW20 / Rd).